A 199-amino-acid chain; its full sequence is Large ribosomal subunit protein bL25 (199 aa).

Belongs to the bacterial ribosomal protein bL25 family. CTC subfamily. As to quaternary structure, part of the 50S ribosomal subunit; part of the 5S rRNA/L5/L18/L25 subcomplex. Contacts the 5S rRNA. Binds to the 5S rRNA independently of L5 and L18.

In terms of biological role, this is one of the proteins that binds to the 5S RNA in the ribosome where it forms part of the central protuberance. The sequence is that of Large ribosomal subunit protein bL25 from Chloroherpeton thalassium (strain ATCC 35110 / GB-78).